Here is a 46-residue protein sequence, read N- to C-terminus: MGMGPSLSIVNPMDVLRQRLLLEIARRRLRDAEEQIKANKDFLQQI.

The residue at position 46 (Ile46) is an Isoleucine amide.

This sequence belongs to the sauvagine/corticotropin-releasing factor/urotensin I family.

The protein localises to the secreted. Functionally, regulation of fluid secretion. Stimulates primary urine secretion by Malpighian tubules and causes a dose-dependent stimulation of cAMP levels in the tubules. This Locusta migratoria (Migratory locust) protein is Diuretic hormone.